Here is a 446-residue protein sequence, read N- to C-terminus: MSLFALGLNHKSAPVNIREQIVFAPDAVTAALQHLRAHTTAREAAILSTCNRTELYVRMDDRAPEMLGEWLARYHRLDPEWLRDYLYLHEGAGAVRHLMRVSAGLDSLVLGEPQILGQAKIAYQGAIDAGTMGRVLDRLFQHAFSVAKQVRTDTGIGANPVSVAFAAVTLARQIFDDFQNRTALLIGAGETIELVARHLREQGLKNLIVANRNLERARQLVELEGGEAIPLSEIPTRLPEADVLVASTASPLPILGKGTVERAVRKRRHRPMFMLDLAVPRDIEPEAGNLDDVYLYTVDDLREVIAENRRSREEAAHQAEEIVQRQVDQFLSWRRAQQAVASICDFRERGHAHARELLQRANRRLRCGEPPERVLAWLSHTLTNRLLHAPTVGLREAAEAGDRERIELARTLLQIENANEDTRESVDKEQTGTTQGAARGDQRSTG.

Residues 49-52, Ser-107, 112-114, and Gln-118 contribute to the substrate site; these read TCNR and EPQ. Cys-50 serves as the catalytic Nucleophile. 187–192 contributes to the NADP(+) binding site; that stretch reads GAGETI. A disordered region spans residues 417-446; that stretch reads NANEDTRESVDKEQTGTTQGAARGDQRSTG. Residues 420–430 are compositionally biased toward basic and acidic residues; that stretch reads EDTRESVDKEQ.

It belongs to the glutamyl-tRNA reductase family. Homodimer.

The enzyme catalyses (S)-4-amino-5-oxopentanoate + tRNA(Glu) + NADP(+) = L-glutamyl-tRNA(Glu) + NADPH + H(+). It functions in the pathway porphyrin-containing compound metabolism; protoporphyrin-IX biosynthesis; 5-aminolevulinate from L-glutamyl-tRNA(Glu): step 1/2. Functionally, catalyzes the NADPH-dependent reduction of glutamyl-tRNA(Glu) to glutamate 1-semialdehyde (GSA). This Alkalilimnicola ehrlichii (strain ATCC BAA-1101 / DSM 17681 / MLHE-1) protein is Glutamyl-tRNA reductase.